Reading from the N-terminus, the 544-residue chain is Formate--tetrahydrofolate ligase (544 aa).

63-70 contacts ATP; that stretch reads TPAGEGKS.

Belongs to the formate--tetrahydrofolate ligase family.

The catalysed reaction is (6S)-5,6,7,8-tetrahydrofolate + formate + ATP = (6R)-10-formyltetrahydrofolate + ADP + phosphate. The protein operates within one-carbon metabolism; tetrahydrofolate interconversion. The polypeptide is Formate--tetrahydrofolate ligase (Fusobacterium nucleatum subsp. nucleatum (strain ATCC 25586 / DSM 15643 / BCRC 10681 / CIP 101130 / JCM 8532 / KCTC 2640 / LMG 13131 / VPI 4355)).